Consider the following 156-residue polypeptide: Small ribosomal subunit protein uS7 (156 aa).

The protein belongs to the universal ribosomal protein uS7 family. Part of the 30S ribosomal subunit. Contacts proteins S9 and S11.

Its function is as follows. One of the primary rRNA binding proteins, it binds directly to 16S rRNA where it nucleates assembly of the head domain of the 30S subunit. Is located at the subunit interface close to the decoding center, probably blocks exit of the E-site tRNA. The sequence is that of Small ribosomal subunit protein uS7 from Mycoplasmopsis pulmonis (strain UAB CTIP) (Mycoplasma pulmonis).